Reading from the N-terminus, the 1247-residue chain is F-box/WD repeat-containing protein A (1247 aa).

In terms of domain architecture, START spans 1-214 (MQYVNGNDIS…PATVSGRLAK (214 aa)). Disordered stretches follow at residues 484–514 (GNKD…DNII) and 552–576 (QQPQ…KEIK). Positions 552–566 (QQPQQQQQQPQEQQQ) are enriched in low complexity. The region spanning 631–677 (NSGFDNLPEEVVQIIFSNLSAINIVNLSLVCKRFKMATDSPILWKNL) is the F-box domain. Disordered regions lie at residues 697–744 (SNLS…QQQQ) and 833–856 (GQES…KRDN). 2 stretches are compositionally biased toward low complexity: residues 707 to 719 (NSNS…GSSS) and 726 to 744 (QQQN…QQQQ). The segment covering 833 to 846 (GQESPINKNSSDNP) has biased composition (polar residues). WD repeat units lie at residues 895-934 (GHNR…GDYE), 945-984 (DHTQ…IEVI), 988-1025 (RPTN…LLWN), 1029-1073 (AHTK…CINT), 1076-1114 (GHSY…TFIS), 1119-1158 (KHTG…LSNI), and 1218-1247 (NHES…RWDF).

In terms of assembly, component of an SCF complex including at least culA. Formation of this complex appears to require activity of the MAP kinase erk2. Interacts with regA.

Its function is as follows. Substrate recognition component of a SCF (SKP1-CUL1-F-box protein) E3 ubiquitin-protein ligase complex which mediates the ubiquitination and subsequent proteasomal degradation of target proteins. May target the cAMP phosphodiesterase regA for degradation leading to an increase in cAMP and PKA activity. Promotes development of prestalk cells as opposed to prespores within the developing fruiting body. Required for culmination and fruiting body development. In Dictyostelium discoideum (Social amoeba), this protein is F-box/WD repeat-containing protein A (fbxA).